Reading from the N-terminus, the 348-residue chain is UPF0283 membrane protein PBPRA2435 (348 aa).

3 consecutive transmembrane segments (helical) span residues 71-91 (GLLI…VVSA), 97-117 (WLAL…ITAL), and 211-231 (EAAV…LVAW).

This sequence belongs to the UPF0283 family.

The protein localises to the cell inner membrane. The polypeptide is UPF0283 membrane protein PBPRA2435 (Photobacterium profundum (strain SS9)).